Reading from the N-terminus, the 435-residue chain is Eukaryotic peptide chain release factor subunit 1-3 (435 aa).

N-acetylalanine is present on alanine 2.

It belongs to the eukaryotic release factor 1 family. In terms of assembly, heterodimer of two subunits, one of which binds GTP.

It localises to the cytoplasm. In terms of biological role, directs the termination of nascent peptide synthesis (translation) in response to the termination codons UAA, UAG and UGA. Modulates plant growth and development. The protein is Eukaryotic peptide chain release factor subunit 1-3 (ERF1-3) of Arabidopsis thaliana (Mouse-ear cress).